The primary structure comprises 582 residues: Leucine-rich repeat transmembrane neuronal protein 3 (582 aa).

The first 30 residues, 1–30 (MGFNVIRLLRGSAVAVVLAPTVLLTMLSSA), serve as a signal peptide directing secretion. The region spanning 31–61 (ERGCPKGCRCEGKMVYCESQKLQEIPSSISA) is the LRRNT domain. The Extracellular segment spans residues 31-420 (ERGCPKGCRC…VDTEHISFHK (390 aa)). LRR repeat units lie at residues 63 to 83 (CLGL…QFKG), 86 to 107 (QLTW…AFNG), 110 to 131 (RLKE…TFRP), 134 to 155 (NLRN…QFRG), 158 to 179 (KLLS…IFQD), 182 to 203 (NLEL…VFAG), 206 to 226 (RLKE…ALFP), 230 to 251 (SLQN…MSWT), 254 to 275 (SLQR…SVFQ), and 279 to 300 (NLQR…ILDS). An N-linked (GlcNAc...) asparagine glycan is attached at N126. Residues 312-363 (NIWECSRNICSLVNWLRSFKGLRENTIICASPKELQGVNVIDAVKNYSICGK) form the LRRCT domain. N-linked (GlcNAc...) asparagine glycosylation is present at N357. The segment at 378 to 410 (KPTFKPKLPRPKHESKPPLPPTVGATEPSPETD) is disordered. Residues 421–441 (IIAGSVALFLSVLVILLVMYV) form a helical membrane-spanning segment. Over 442–582 (SWKRYPASMK…RISDHKPQLA (141 aa)) the chain is Cytoplasmic.

The protein belongs to the LRRTM family. In terms of tissue distribution, expressed in neuronal tissues.

It is found in the cell membrane. It localises to the postsynaptic cell membrane. May play a role in the development and maintenance of the vertebrate nervous system. Exhibits a limited synaptogenic activity in vitro, restricted to excitatory presynaptic differentiation. This chain is Leucine-rich repeat transmembrane neuronal protein 3 (Lrrtm3), found in Mus musculus (Mouse).